A 485-amino-acid polypeptide reads, in one-letter code: Cysteine--tRNA ligase (485 aa).

Position 27 (Cys27) interacts with Zn(2+). A 'HIGH' region motif is present at residues 29–39; it reads ITAYDLCHIGH. Cys208, His233, and Glu237 together coordinate Zn(2+). A 'KMSKS' region motif is present at residues 265 to 269; that stretch reads KMSKS. Lys268 contacts ATP.

Belongs to the class-I aminoacyl-tRNA synthetase family. As to quaternary structure, monomer. It depends on Zn(2+) as a cofactor.

The protein localises to the cytoplasm. It catalyses the reaction tRNA(Cys) + L-cysteine + ATP = L-cysteinyl-tRNA(Cys) + AMP + diphosphate. The protein is Cysteine--tRNA ligase of Solidesulfovibrio magneticus (strain ATCC 700980 / DSM 13731 / RS-1) (Desulfovibrio magneticus).